The chain runs to 544 residues: CTP synthase (544 aa).

Residues 1 to 266 (MIRYIFITGG…DSEVLSHFGI (266 aa)) form an amidoligase domain region. Position 13 (serine 13) interacts with CTP. A UTP-binding site is contributed by serine 13. Residues 14–19 (SLGKGI) and aspartate 71 each bind ATP. The Mg(2+) site is built by aspartate 71 and glutamate 140. CTP is bound by residues 147 to 149 (DIE), 187 to 192 (KTKPTQ), and lysine 223. Residues 187–192 (KTKPTQ) and lysine 223 each bind UTP. 239–241 (RDV) is a binding site for ATP. The Glutamine amidotransferase type-1 domain occupies 292–543 (TIGLVGKYTD…IAAAVKQSRL (252 aa)). Glycine 355 is an L-glutamine binding site. Residue cysteine 382 is the Nucleophile; for glutamine hydrolysis of the active site. L-glutamine-binding positions include 383–386 (YGMQ), glutamate 406, and arginine 471. Residues histidine 516 and glutamate 518 contribute to the active site.

Belongs to the CTP synthase family. Homotetramer.

It catalyses the reaction UTP + L-glutamine + ATP + H2O = CTP + L-glutamate + ADP + phosphate + 2 H(+). It carries out the reaction L-glutamine + H2O = L-glutamate + NH4(+). The enzyme catalyses UTP + NH4(+) + ATP = CTP + ADP + phosphate + 2 H(+). It functions in the pathway pyrimidine metabolism; CTP biosynthesis via de novo pathway; CTP from UDP: step 2/2. Its activity is regulated as follows. Allosterically activated by GTP, when glutamine is the substrate; GTP has no effect on the reaction when ammonia is the substrate. The allosteric effector GTP functions by stabilizing the protein conformation that binds the tetrahedral intermediate(s) formed during glutamine hydrolysis. Inhibited by the product CTP, via allosteric rather than competitive inhibition. Functionally, catalyzes the ATP-dependent amination of UTP to CTP with either L-glutamine or ammonia as the source of nitrogen. Regulates intracellular CTP levels through interactions with the four ribonucleotide triphosphates. This is CTP synthase from Hyphomonas neptunium (strain ATCC 15444).